The primary structure comprises 67 residues: Conotoxin TsMMSK-011 (67 aa).

The signal sequence occupies residues 1 to 20 (MMSKLGVLLTICLLLFPLTA). Residues 21 to 50 (VQLDGDQPADLPALRTQDISTDHSPWFDPV) constitute a propeptide that is removed on maturation. Cystine bridges form between Cys-53–Cys-65, Cys-54–Cys-61, and Cys-58–Cys-64. Position 63 is a 4-hydroxyproline (Pro-63).

The protein belongs to the conotoxin M superfamily. In terms of tissue distribution, expressed by the venom duct.

It is found in the secreted. The polypeptide is Conotoxin TsMMSK-011 (Conus tessulatus (Tessellate cone)).